The primary structure comprises 151 residues: Deoxyuridine 5'-triphosphate nucleotidohydrolase (151 aa).

Substrate contacts are provided by residues 70 to 72 (RSG), N83, 87 to 89 (LID), and M97.

The protein belongs to the dUTPase family. Requires Mg(2+) as cofactor.

It catalyses the reaction dUTP + H2O = dUMP + diphosphate + H(+). Its pathway is pyrimidine metabolism; dUMP biosynthesis; dUMP from dCTP (dUTP route): step 2/2. Functionally, this enzyme is involved in nucleotide metabolism: it produces dUMP, the immediate precursor of thymidine nucleotides and it decreases the intracellular concentration of dUTP so that uracil cannot be incorporated into DNA. The chain is Deoxyuridine 5'-triphosphate nucleotidohydrolase from Pseudomonas syringae pv. tomato (strain ATCC BAA-871 / DC3000).